Consider the following 665-residue polypeptide: UvrABC system protein B (665 aa).

Positions 25–176 (NSIEKGNRFQ…NQRQLLRDLV (152 aa)) constitute a Helicase ATP-binding domain. Residue 38-45 (GATGTGKT) participates in ATP binding. Positions 91–114 (YYDYYQPEAYIPVSDTYIEKSASI) match the Beta-hairpin motif. Positions 429 to 595 (QVDDLLGEIK…PIVTRSSNAI (167 aa)) constitute a Helicase C-terminal domain. The UVR domain occupies 626–661 (PELIGQLEEQMKEAAKKLEFEEAAKYRDRIQHLRDK).

The protein belongs to the UvrB family. As to quaternary structure, forms a heterotetramer with UvrA during the search for lesions. Interacts with UvrC in an incision complex.

Its subcellular location is the cytoplasm. In terms of biological role, the UvrABC repair system catalyzes the recognition and processing of DNA lesions. A damage recognition complex composed of 2 UvrA and 2 UvrB subunits scans DNA for abnormalities. Upon binding of the UvrA(2)B(2) complex to a putative damaged site, the DNA wraps around one UvrB monomer. DNA wrap is dependent on ATP binding by UvrB and probably causes local melting of the DNA helix, facilitating insertion of UvrB beta-hairpin between the DNA strands. Then UvrB probes one DNA strand for the presence of a lesion. If a lesion is found the UvrA subunits dissociate and the UvrB-DNA preincision complex is formed. This complex is subsequently bound by UvrC and the second UvrB is released. If no lesion is found, the DNA wraps around the other UvrB subunit that will check the other stand for damage. This is UvrABC system protein B from Gloeothece citriformis (strain PCC 7424) (Cyanothece sp. (strain PCC 7424)).